A 545-amino-acid chain; its full sequence is CTP synthase (545 aa).

Positions 1 to 265 (MNGIKHIFIT…DKFVIKHLDL (265 aa)) are amidoligase domain. Ser-15 is a binding site for CTP. Ser-15 is a binding site for UTP. Residues 16–21 (SIGKGL) and Asp-73 each bind ATP. 2 residues coordinate Mg(2+): Asp-73 and Glu-141. Residues 148 to 150 (DIE), 188 to 193 (KTKPTQ), and Lys-224 each bind CTP. UTP is bound by residues 188–193 (KTKPTQ) and Lys-224. Residues 290-534 (EIAIIGKYTG…VAAALARKEI (245 aa)) enclose the Glutamine amidotransferase type-1 domain. Gly-349 is a binding site for L-glutamine. Cys-376 (nucleophile; for glutamine hydrolysis) is an active-site residue. Residues 377-380 (LGMQ), Glu-400, and Arg-460 each bind L-glutamine. Active-site residues include His-507 and Glu-509.

The protein belongs to the CTP synthase family. Homotetramer.

The catalysed reaction is UTP + L-glutamine + ATP + H2O = CTP + L-glutamate + ADP + phosphate + 2 H(+). It carries out the reaction L-glutamine + H2O = L-glutamate + NH4(+). It catalyses the reaction UTP + NH4(+) + ATP = CTP + ADP + phosphate + 2 H(+). The protein operates within pyrimidine metabolism; CTP biosynthesis via de novo pathway; CTP from UDP: step 2/2. With respect to regulation, allosterically activated by GTP, when glutamine is the substrate; GTP has no effect on the reaction when ammonia is the substrate. The allosteric effector GTP functions by stabilizing the protein conformation that binds the tetrahedral intermediate(s) formed during glutamine hydrolysis. Inhibited by the product CTP, via allosteric rather than competitive inhibition. Its function is as follows. Catalyzes the ATP-dependent amination of UTP to CTP with either L-glutamine or ammonia as the source of nitrogen. Regulates intracellular CTP levels through interactions with the four ribonucleotide triphosphates. In Tropheryma whipplei (strain Twist) (Whipple's bacillus), this protein is CTP synthase.